We begin with the raw amino-acid sequence, 256 residues long: Trypsinogen-like protein 3 (256 aa).

The first 14 residues, 1-14 (MILLLVLALGLAGA), serve as a signal peptide directing secretion. Residues 15–237 (SPLGEYKECP…YNDWIHQVMA (223 aa)) enclose the Peptidase S1 domain. 6 disulfide bridges follow: Cys-23/Cys-153, Cys-41/Cys-57, Cys-125/Cys-226, Cys-132/Cys-199, Cys-164/Cys-180, and Cys-189/Cys-213.

It belongs to the peptidase S1 family.

The polypeptide is Trypsinogen-like protein 3 (trp3) (Pseudopleuronectes americanus (Winter flounder)).